A 157-amino-acid polypeptide reads, in one-letter code: Electron transfer flavoprotein regulatory factor 1 homolog (157 aa).

This sequence belongs to the complex I LYR family.

Its subcellular location is the mitochondrion. In Dictyostelium discoideum (Social amoeba), this protein is Electron transfer flavoprotein regulatory factor 1 homolog.